A 206-amino-acid chain; its full sequence is Small ribosomal subunit protein uS4 (206 aa).

The S4 RNA-binding domain maps to 96 to 156; the sequence is RRLDNVVYRM…EKSKNQLRIK (61 aa).

This sequence belongs to the universal ribosomal protein uS4 family. Part of the 30S ribosomal subunit. Contacts protein S5. The interaction surface between S4 and S5 is involved in control of translational fidelity.

One of the primary rRNA binding proteins, it binds directly to 16S rRNA where it nucleates assembly of the body of the 30S subunit. In terms of biological role, with S5 and S12 plays an important role in translational accuracy. The protein is Small ribosomal subunit protein uS4 of Hahella chejuensis (strain KCTC 2396).